The chain runs to 119 residues: Flagellar transcriptional regulator FlhD (119 aa).

This sequence belongs to the FlhD family. As to quaternary structure, homodimer; disulfide-linked. Forms a heterohexamer composed of two FlhC and four FlhD subunits. Each FlhC binds a FlhD dimer, forming a heterotrimer, and a hexamer assembles by dimerization of two heterotrimers.

It localises to the cytoplasm. Its function is as follows. Functions in complex with FlhC as a master transcriptional regulator that regulates transcription of several flagellar and non-flagellar operons by binding to their promoter region. Activates expression of class 2 flagellar genes, including fliA, which is a flagellum-specific sigma factor that turns on the class 3 genes. Also regulates genes whose products function in a variety of physiological pathways. This Pectobacterium atrosepticum (strain SCRI 1043 / ATCC BAA-672) (Erwinia carotovora subsp. atroseptica) protein is Flagellar transcriptional regulator FlhD.